The sequence spans 427 residues: 3-phosphoshikimate 1-carboxyvinyltransferase (427 aa).

3-phosphoshikimate is bound by residues lysine 22, serine 23, and arginine 27. Lysine 22 contributes to the phosphoenolpyruvate binding site. Residues glycine 96 and arginine 124 each coordinate phosphoenolpyruvate. 3-phosphoshikimate-binding residues include serine 169, serine 170, glutamine 171, serine 197, aspartate 313, asparagine 336, and lysine 340. Glutamine 171 contributes to the phosphoenolpyruvate binding site. Aspartate 313 acts as the Proton acceptor in catalysis. Residues arginine 344, arginine 386, and lysine 411 each contribute to the phosphoenolpyruvate site.

Belongs to the EPSP synthase family. As to quaternary structure, monomer.

It localises to the cytoplasm. It carries out the reaction 3-phosphoshikimate + phosphoenolpyruvate = 5-O-(1-carboxyvinyl)-3-phosphoshikimate + phosphate. Its pathway is metabolic intermediate biosynthesis; chorismate biosynthesis; chorismate from D-erythrose 4-phosphate and phosphoenolpyruvate: step 6/7. Functionally, catalyzes the transfer of the enolpyruvyl moiety of phosphoenolpyruvate (PEP) to the 5-hydroxyl of shikimate-3-phosphate (S3P) to produce enolpyruvyl shikimate-3-phosphate and inorganic phosphate. The protein is 3-phosphoshikimate 1-carboxyvinyltransferase of Salmonella arizonae (strain ATCC BAA-731 / CDC346-86 / RSK2980).